The following is a 363-amino-acid chain: Outer membrane protein P2 (363 aa).

A signal peptide spans 1–20; it reads MKKTLAALIVGAFAASAANA.

Belongs to the Gram-negative porin family. As to quaternary structure, homotrimer.

The protein resides in the cell outer membrane. In terms of biological role, forms pores that allow passive diffusion of small molecules across the outer membrane. This Haemophilus influenzae protein is Outer membrane protein P2 (ompP2).